The primary structure comprises 104 residues: N(4)-acetylcytidine amidohydrolase (104 aa).

Residues 7–93 (MTFFSRFEAD…EVIQEIYPGI (87 aa)) form the ASCH domain. The active-site Proton acceptor is K22. T25 functions as the Nucleophile in the catalytic mechanism. The Proton donor role is filled by E75.

The protein belongs to the N(4)-acetylcytidine amidohydrolase family.

The enzyme catalyses N(4)-acetylcytidine + H2O = cytidine + acetate + H(+). The catalysed reaction is N(4)-acetyl-2'-deoxycytidine + H2O = 2'-deoxycytidine + acetate + H(+). It carries out the reaction N(4)-acetylcytosine + H2O = cytosine + acetate + H(+). Functionally, catalyzes the hydrolysis of N(4)-acetylcytidine (ac4C). This Vibrio vulnificus (strain YJ016) protein is N(4)-acetylcytidine amidohydrolase.